The following is a 147-amino-acid chain: 3-dehydroquinate dehydratase (147 aa).

The active-site Proton acceptor is the Tyr-23. Residues Asn-75, His-81, and Asp-88 each contribute to the substrate site. Catalysis depends on His-101, which acts as the Proton donor. Residues Leu-102–Ser-103 and Arg-112 contribute to the substrate site.

The protein belongs to the type-II 3-dehydroquinase family. In terms of assembly, homododecamer.

The enzyme catalyses 3-dehydroquinate = 3-dehydroshikimate + H2O. The protein operates within metabolic intermediate biosynthesis; chorismate biosynthesis; chorismate from D-erythrose 4-phosphate and phosphoenolpyruvate: step 3/7. In terms of biological role, catalyzes a trans-dehydration via an enolate intermediate. This Stutzerimonas stutzeri (strain A1501) (Pseudomonas stutzeri) protein is 3-dehydroquinate dehydratase.